Here is a 151-residue protein sequence, read N- to C-terminus: Macrodomain Ter protein (151 aa).

It belongs to the MatP family. In terms of assembly, homodimer.

It is found in the cytoplasm. Functionally, required for spatial organization of the terminus region of the chromosome (Ter macrodomain) during the cell cycle. Prevents early segregation of duplicated Ter macrodomains during cell division. Binds specifically to matS, which is a 13 bp signature motif repeated within the Ter macrodomain. The chain is Macrodomain Ter protein from Enterobacter sp. (strain 638).